Reading from the N-terminus, the 382-residue chain is Succinate--CoA ligase [ADP-forming] subunit beta (382 aa).

An ATP-grasp domain is found at 9–237 (KQVFADAGIP…AAEGDELEQK (229 aa)). ATP-binding positions include lysine 45, 52-54 (GRG), glutamate 91, valine 94, and glutamate 99. Mg(2+) is bound by residues asparagine 191 and aspartate 205. Residues asparagine 257 and 314–316 (GIT) each bind substrate.

The protein belongs to the succinate/malate CoA ligase beta subunit family. Heterotetramer of two alpha and two beta subunits. Mg(2+) is required as a cofactor.

It catalyses the reaction succinate + ATP + CoA = succinyl-CoA + ADP + phosphate. It carries out the reaction GTP + succinate + CoA = succinyl-CoA + GDP + phosphate. It functions in the pathway carbohydrate metabolism; tricarboxylic acid cycle; succinate from succinyl-CoA (ligase route): step 1/1. Functionally, succinyl-CoA synthetase functions in the citric acid cycle (TCA), coupling the hydrolysis of succinyl-CoA to the synthesis of either ATP or GTP and thus represents the only step of substrate-level phosphorylation in the TCA. The beta subunit provides nucleotide specificity of the enzyme and binds the substrate succinate, while the binding sites for coenzyme A and phosphate are found in the alpha subunit. This is Succinate--CoA ligase [ADP-forming] subunit beta from Haloarcula marismortui (strain ATCC 43049 / DSM 3752 / JCM 8966 / VKM B-1809) (Halobacterium marismortui).